Here is a 668-residue protein sequence, read N- to C-terminus: MAP kinase kinase PBS2 (668 aa).

Basic and acidic residues predominate over residues 1–15; the sequence is MEDKFANLSLHEKTG. Disordered stretches follow at residues 1 to 43, 61 to 120, and 181 to 313; these read MEDK…SSHY, RALK…ASSK, and NPNR…GSSG. Composition is skewed to polar residues over residues 16–43, 68–91, and 104–120; these read KSSI…SSHY, SVGS…QQIV, and SKVS…ASSK. A Phosphoserine modification is found at serine 68. Over residues 239-250 the composition is skewed to low complexity; sequence AQQPQQFAPSPS. Phosphoserine is present on serine 269. The span at 270–300 shows a compositional bias: polar residues; it reads NPGSLINGVQSTSTSSSTEGPHDTVGTTPRT. The span at 301 to 310 shows a compositional bias: low complexity; the sequence is GNSNNSSNSG. Residues 360–623 enclose the Protein kinase domain; it reads LEFLDELGHG…YAALTEHPWL (264 aa). Residues 366–374 and lysine 389 contribute to the ATP site; that span reads LGHGNYGNV. Catalysis depends on aspartate 485, which acts as the Proton acceptor. Serine 514 is modified (phosphoserine). Threonine 518 carries the phosphothreonine modification.

The protein belongs to the protein kinase superfamily. STE Ser/Thr protein kinase family. MAP kinase kinase subfamily. Interacts with NBP2, PTC1, SHO1 and STE11. Post-translationally, activated by phosphorylation by SSK2 or SSK22. Ser/Thr phosphorylation is also necessary for SHO1-mediated activation.

It localises to the cytoplasm. The catalysed reaction is L-seryl-[protein] + ATP = O-phospho-L-seryl-[protein] + ADP + H(+). The enzyme catalyses L-threonyl-[protein] + ATP = O-phospho-L-threonyl-[protein] + ADP + H(+). It carries out the reaction L-tyrosyl-[protein] + ATP = O-phospho-L-tyrosyl-[protein] + ADP + H(+). Functionally, kinase involved in a signal transduction pathway that is activated by changes in the osmolarity of the extracellular environment. Activates the MAP kinase HOG1 by concomitant phosphorylation at 'Thr-174' and 'Tyr-176'. This Saccharomyces cerevisiae (strain ATCC 204508 / S288c) (Baker's yeast) protein is MAP kinase kinase PBS2 (PBS2).